A 277-amino-acid polypeptide reads, in one-letter code: GATA transcription factor 15 (277 aa).

Positions 52 to 94 are disordered; sequence AYDDHSTVTTSPSSPSSSSTGSVDCTLSLGTPSSRRAEPVAAA. The segment covering 58-74 has biased composition (low complexity); that stretch reads TVTTSPSSPSSSSTGSV. The GATA-type zinc finger occupies 154-179; that stretch reads CANCGTASTPLWRNGPRGPKSLCNAC.

The protein belongs to the type IV zinc-finger family. Class B subfamily.

Functionally, probable transcription factor that regulates organogenesis during transition from the vegetative to the reproductive phase. Regulates the expression of CYP78A11/PLA1, HD3A and MADS1 during reproductive development in rice. May act upstream of CYP78A11/PLA1 during panicle development. Acts independently of the photoperiodic and gibberellin signaling pathways. The polypeptide is GATA transcription factor 15 (Oryza sativa subsp. indica (Rice)).